The sequence spans 171 residues: Peptide methionine sulfoxide reductase MsrA (171 aa).

Residue Cys12 is part of the active site.

This sequence belongs to the MsrA Met sulfoxide reductase family.

The catalysed reaction is L-methionyl-[protein] + [thioredoxin]-disulfide + H2O = L-methionyl-(S)-S-oxide-[protein] + [thioredoxin]-dithiol. The enzyme catalyses [thioredoxin]-disulfide + L-methionine + H2O = L-methionine (S)-S-oxide + [thioredoxin]-dithiol. Its function is as follows. Has an important function as a repair enzyme for proteins that have been inactivated by oxidation. Catalyzes the reversible oxidation-reduction of methionine sulfoxide in proteins to methionine. This chain is Peptide methionine sulfoxide reductase MsrA, found in Leuconostoc mesenteroides subsp. mesenteroides (strain ATCC 8293 / DSM 20343 / BCRC 11652 / CCM 1803 / JCM 6124 / NCDO 523 / NBRC 100496 / NCIMB 8023 / NCTC 12954 / NRRL B-1118 / 37Y).